The primary structure comprises 360 residues: Protein Wnt-2 (360 aa).

The first 25 residues, M1–S25, serve as a signal peptide directing secretion. 11 disulfide bridges follow: C76/C87, C127/C135, C137/C157, C206/C220, C208/C215, C278/C309, C294/C304, C308/C348, C324/C339, C326/C336, and C331/C332. S212 carries the O-palmitoleoyl serine; by PORCN lipid modification. N-linked (GlcNAc...) asparagine glycosylation occurs at N295.

It belongs to the Wnt family. In terms of processing, palmitoleoylation is required for efficient binding to frizzled receptors. Depalmitoleoylation leads to Wnt signaling pathway inhibition. Expressed in brain in the thalamus, in fetal and adult lung and in placenta.

The protein resides in the secreted. The protein localises to the extracellular space. It localises to the extracellular matrix. Ligand for members of the frizzled family of seven transmembrane receptors. Functions in the canonical Wnt signaling pathway that results in activation of transcription factors of the TCF/LEF family. Functions as a upstream regulator of FGF10 expression. Plays an important role in embryonic lung development. May contribute to embryonic brain development by regulating the proliferation of dopaminergic precursors and neurons. In Homo sapiens (Human), this protein is Protein Wnt-2 (WNT2).